Reading from the N-terminus, the 505-residue chain is DEAD-box ATP-dependent RNA helicase 41 (505 aa).

The segment at glycine 27–glutamine 56 adopts an HIT-type zinc-finger fold. The Q motif motif lies at leucine 110–methionine 138. The region spanning isoleucine 141–valine 318 is the Helicase ATP-binding domain. Alanine 154–threonine 161 provides a ligand contact to ATP. The DEAD box signature appears at aspartate 267–aspartate 270. The Helicase C-terminal domain maps to lysine 342–threonine 492.

Belongs to the DEAD box helicase family. DDX59 subfamily.

It carries out the reaction ATP + H2O = ADP + phosphate + H(+). The polypeptide is DEAD-box ATP-dependent RNA helicase 41 (RH41) (Arabidopsis thaliana (Mouse-ear cress)).